A 74-amino-acid chain; its full sequence is Small integral membrane protein 15 (74 aa).

The chain crosses the membrane as a helical span at residues 20 to 40; sequence YGFLTTVILALTPLFLASAVL. Residues 42-74 are a coiled coil; it reads WKLAKMIEAREKEQKKKQKRQENIAKAKRLKKD. Basic and acidic residues predominate over residues 55 to 66; it reads QKKKQKRQENIA. The segment at 55–74 is disordered; sequence QKKKQKRQENIAKAKRLKKD.

It belongs to the SMIM15 family.

The protein resides in the membrane. This Homo sapiens (Human) protein is Small integral membrane protein 15 (SMIM15).